Here is a 192-residue protein sequence, read N- to C-terminus: Probable apo-citrate lyase phosphoribosyl-dephospho-CoA transferase (192 aa).

This sequence belongs to the CitX family.

The catalysed reaction is apo-[citrate lyase ACP] + 2'-(5''-triphospho-alpha-D-ribosyl)-3'-dephospho-CoA = holo-[citrate lyase ACP] + diphosphate. Its function is as follows. Transfers 2-(5''-triphosphoribosyl)-3'-dephosphocoenzyme-A on a serine residue to the apo-acyl carrier protein (gamma chain) of the citrate lyase to yield holo-acyl carrier protein. The protein is Probable apo-citrate lyase phosphoribosyl-dephospho-CoA transferase of Streptococcus pyogenes serotype M6 (strain ATCC BAA-946 / MGAS10394).